We begin with the raw amino-acid sequence, 363 residues long: Probable aminomethyltransferase (363 aa).

The protein belongs to the GcvT family. In terms of assembly, the glycine cleavage system is composed of four proteins: P, T, L and H.

It carries out the reaction N(6)-[(R)-S(8)-aminomethyldihydrolipoyl]-L-lysyl-[protein] + (6S)-5,6,7,8-tetrahydrofolate = N(6)-[(R)-dihydrolipoyl]-L-lysyl-[protein] + (6R)-5,10-methylene-5,6,7,8-tetrahydrofolate + NH4(+). Its function is as follows. The glycine cleavage system catalyzes the degradation of glycine. The polypeptide is Probable aminomethyltransferase (Halobacterium salinarum (strain ATCC 29341 / DSM 671 / R1)).